We begin with the raw amino-acid sequence, 445 residues long: Phosphoglucosamine mutase (445 aa).

The active-site Phosphoserine intermediate is Ser-102. Mg(2+) contacts are provided by Ser-102, Asp-241, Asp-243, and Asp-245. The residue at position 102 (Ser-102) is a Phosphoserine.

This sequence belongs to the phosphohexose mutase family. Mg(2+) is required as a cofactor. Activated by phosphorylation.

The enzyme catalyses alpha-D-glucosamine 1-phosphate = D-glucosamine 6-phosphate. In terms of biological role, catalyzes the conversion of glucosamine-6-phosphate to glucosamine-1-phosphate. This is Phosphoglucosamine mutase from Aliivibrio salmonicida (strain LFI1238) (Vibrio salmonicida (strain LFI1238)).